The following is a 447-amino-acid chain: Tubulin alpha-1 chain (447 aa).

GTP contacts are provided by Gln-11, Glu-72, Ser-141, Gly-145, Thr-146, Thr-180, Asn-207, and Asn-229. Mg(2+) is bound at residue Glu-72. Glu-255 is an active-site residue.

This sequence belongs to the tubulin family. As to quaternary structure, dimer of alpha and beta chains. A typical microtubule is a hollow water-filled tube with an outer diameter of 25 nm and an inner diameter of 15 nM. Alpha-beta heterodimers associate head-to-tail to form protofilaments running lengthwise along the microtubule wall with the beta-tubulin subunit facing the microtubule plus end conferring a structural polarity. Microtubules usually have 13 protofilaments but different protofilament numbers can be found in some organisms and specialized cells. Mg(2+) serves as cofactor.

The protein localises to the cytoplasm. It localises to the cytoskeleton. It catalyses the reaction GTP + H2O = GDP + phosphate + H(+). Tubulin is the major constituent of microtubules, a cylinder consisting of laterally associated linear protofilaments composed of alpha- and beta-tubulin heterodimers. Microtubules grow by the addition of GTP-tubulin dimers to the microtubule end, where a stabilizing cap forms. Below the cap, tubulin dimers are in GDP-bound state, owing to GTPase activity of alpha-tubulin. This chain is Tubulin alpha-1 chain (TUB1), found in Saccharomyces cerevisiae (strain ATCC 204508 / S288c) (Baker's yeast).